Here is a 301-residue protein sequence, read N- to C-terminus: Amine sulfotransferase (301 aa).

46–51 (KSGTVW) serves as a coordination point for 3'-phosphoadenylyl sulfate. H101 (proton acceptor) is an active-site residue. 3'-phosphoadenylyl sulfate is bound by residues R123, S131, Y186, 220–225 (ATFENM), and 252–254 (RKG).

It belongs to the sulfotransferase 1 family. As to expression, expressed in male liver.

It is found in the cytoplasm. It carries out the reaction a primary amine + 3'-phosphoadenylyl sulfate = a sulfamate + adenosine 3',5'-bisphosphate + 2 H(+). Functionally, sulfotransferase that utilizes 3'-phospho-5'-adenylyl sulfate (PAPS) as sulfonate donor to catalyze the N-sulfonation of amines (PTHP, aniline, 4-chloroaniline, 2-naphthylamine). The protein is Amine sulfotransferase (SULT3A1) of Oryctolagus cuniculus (Rabbit).